Here is a 127-residue protein sequence, read N- to C-terminus: Fluoride-specific ion channel FluC 2 (127 aa).

4 helical membrane passes run 4-24 (IIAITGFAMLGGGLREGLSLL), 31-51 (FWITCLINIVGAFVLSLITNL), 62-82 (IVIGMSVGFVGSFTTFSTFTF), and 94-114 (VLALSYVAASLGLGLLAGLAG). Na(+)-binding residues include Gly72 and Thr75.

Belongs to the fluoride channel Fluc/FEX (TC 1.A.43) family.

It is found in the cell membrane. The enzyme catalyses fluoride(in) = fluoride(out). Its activity is regulated as follows. Na(+) is not transported, but it plays an essential structural role and its presence is essential for fluoride channel function. In terms of biological role, fluoride-specific ion channel. Important for reducing fluoride concentration in the cell, thus reducing its toxicity. This Lactiplantibacillus plantarum (strain ATCC BAA-793 / NCIMB 8826 / WCFS1) (Lactobacillus plantarum) protein is Fluoride-specific ion channel FluC 2.